A 406-amino-acid polypeptide reads, in one-letter code: Exo-alpha-sialidase (406 aa).

The first 20 residues, 1 to 20 (MQSMRFMILALLVQFLPAWA), serve as a signal peptide directing secretion. Positions 59, 78, 84, and 148 each coordinate substrate. N235 carries an N-linked (GlcNAc...) asparagine glycan. Substrate-binding positions include R265, R322, 322 to 323 (RR), 331 to 332 (YD), K337, Y358, D376, and 376 to 378 (DFF). Residue N396 is glycosylated (N-linked (GlcNAc...) asparagine).

It belongs to the glycosyl hydrolase 33 family.

It catalyses the reaction Hydrolysis of alpha-(2-&gt;3)-, alpha-(2-&gt;6)-, alpha-(2-&gt;8)- glycosidic linkages of terminal sialic acid residues in oligosaccharides, glycoproteins, glycolipids, colominic acid and synthetic substrates.. Functionally, sialidase is able to release sialic acid from a wide variety of natural substrates including bovine salivary mucin, colominic acid, bovine fetuin, a serum glycoprotein containing both alpha-2-6 and alpha-2-3-linkages in a ratio of about 3:2, and glycoproteins and glycolipids from thermally denatured human lung epithelial cells. Does not show any trans-sialidase activity since it is able to remove terminal sialic acid residues but is unable to catalyze their transfer to the acceptor substrate. 2-keto-3-deoxynononic acid (KDN) is the preferred substrate and A.fumigatus can utilize KDN as a sole carbon source. This is Exo-alpha-sialidase from Aspergillus fumigatus (strain ATCC MYA-4609 / CBS 101355 / FGSC A1100 / Af293) (Neosartorya fumigata).